Consider the following 462-residue polypeptide: Gamma-aminobutyric acid receptor subunit alpha-5 (462 aa).

The signal sequence occupies residues 1-31 (MDNGMFSSFIMIKNLLLFCISMNLASHFGFS). At 32 to 260 (QMPTSSVKAE…FHLKRKIGYF (229 aa)) the chain is on the extracellular side. A glycan (N-linked (GlcNAc...) asparagine) is linked at N45. R101 is a binding site for 4-aminobutanoate. A glycan (N-linked (GlcNAc...) asparagine) is linked at N145. Position 164 (T164) interacts with 4-aminobutanoate. A disulfide bridge connects residues C173 and C187. N-linked (GlcNAc...) asparagine glycosylation is found at N207 and N236. 3 helical membrane passes run 261 to 281 (VIQTYLPCIMTVILSQVSFWL), 287 to 308 (PARTVFGVTTVLTMTTLSISAR), and 319 to 340 (AMDWFIAVCYAFVFSALIEFAT). The Cytoplasmic portion of the chain corresponds to 341-427 (VNYFTKRGWA…TYNSISKIDK (87 aa)). K355 is covalently cross-linked (Glycyl lysine isopeptide (Lys-Gly) (interchain with G-Cter in ubiquitin)). A disordered region spans residues 375–412 (TNAYTTGKMTHPPNIPKEQTPAGTTNASSASVKPEDKA). A compositionally biased stretch (polar residues) spans 395–405 (PAGTTNASSAS). Residues 428–448 (MSRIIFPLLFGTFNLVYWATY) form a helical membrane-spanning segment.

Belongs to the ligand-gated ion channel (TC 1.A.9) family. Gamma-aminobutyric acid receptor (TC 1.A.9.5) subfamily. GABRA5 sub-subfamily. Heteropentamer, formed by a combination of alpha (GABRA1-6), beta (GABRB1-3), gamma (GABRG1-3), delta (GABRD), epsilon (GABRE), rho (GABRR1-3), pi (GABRP) and theta (GABRQ) chains, each subunit exhibiting distinct physiological and pharmacological properties.

The protein localises to the postsynaptic cell membrane. It localises to the cell membrane. It carries out the reaction chloride(in) = chloride(out). In terms of biological role, alpha subunit of the heteropentameric ligand-gated chloride channel gated by gamma-aminobutyric acid (GABA), a major inhibitory neurotransmitter in the brain. GABA-gated chloride channels, also named GABA(A) receptors (GABAAR), consist of five subunits arranged around a central pore and contain GABA active binding site(s) located at the alpha and beta subunit interface(s). When activated by GABA, GABAARs selectively allow the flow of chloride anions across the cell membrane down their electrochemical gradient. GABAARs containing alpha-5/GABRA5 subunits are mainly extrasynaptic and contribute to the tonic GABAergic inhibition in the hippocampus. Extrasynaptic alpha-5-containing GABAARs in CA1 pyramidal neurons play a role in learning and memory processes. The sequence is that of Gamma-aminobutyric acid receptor subunit alpha-5 (GABRA5) from Bos taurus (Bovine).